A 608-amino-acid polypeptide reads, in one-letter code: MHYMKWIYPRRLRNQMILMAILMVIVPTLTIGYIVETEGRSAVLSEKEKKLSAVVNLLNQALGDRYDLYIDLPREERIRALNAELAPITENITHAFPGIGAGYYNKMLDAIITYAPSALYQNNVGVTIAADHPGREVMRTNTPLVYSGRQVRGDILNSMLPIERNGEILGYIWANELTEDIRRQAWKMDVRIIIVLTAGLLISLLLIVLFSRRLSANIDIITDGLSTLAQNIPTRLPQLPGEMGQISQSVNNLAQALRETRTLNDLIIENAADGVIAIDRQGDVTTMNPAAEVITGYQRHELVGQPYSMLFDNTQFYSPVLDTLEHGTEHVALEISFPGRDRTIELSVTTSRIHNTHGEMIGALVIFSDLTARKETQRRMAQAERLATLGELMAGVAHEVRNPLTAIRGYVQILRQQTSDPIHQEYLSVVLKEIDSINKVIQQLLEFSRPRHSQWQQVSLNALVEETLVLVQTAGVQARVDFISELDNELSPINADRELLKQVLLNILINAVQAISARGKIRIQTWQYSDSQQAISIEDNGCGIDLSLQKKIFDPFFTTKASGTGLGLALSQRIINAHQGDIRVASLPGYGATFTLILPINPQGNQTV.

Residues 1–15 (MHYMKWIYPRRLRNQ) are Cytoplasmic-facing. A helical transmembrane segment spans residues 16 to 36 (MILMAILMVIVPTLTIGYIVE). At 37–189 (TEGRSAVLSE…DIRRQAWKMD (153 aa)) the chain is on the periplasmic side. Residues 190–210 (VRIIIVLTAGLLISLLLIVLF) form a helical membrane-spanning segment. At 211–608 (SRRLSANIDI…PINPQGNQTV (398 aa)) the chain is on the cytoplasmic side. In terms of domain architecture, HAMP spans 212-262 (RRLSANIDIITDGLSTLAQNIPTRLPQLPGEMGQISQSVNNLAQALRETRT). The region spanning 260 to 305 (TRTLNDLIIENAADGVIAIDRQGDVTTMNPAAEVITGYQRHELVGQ) is the PAS domain. Positions 326–382 (HGTEHVALEISFPGRDRTIELSVTTSRIHNTHGEMIGALVIFSDLTARKETQRRMAQ) constitute a PAC domain. Positions 395 to 602 (GVAHEVRNPL…TFTLILPINP (208 aa)) constitute a Histidine kinase domain. His-398 carries the phosphohistidine; by autocatalysis modification.

Homodimer. Post-translationally, autophosphorylated. Each AtoS molecule may phosphorylate its partner within the dimer rather than phosphorylating itself.

It localises to the cell inner membrane. The enzyme catalyses ATP + protein L-histidine = ADP + protein N-phospho-L-histidine.. Functionally, member of the two-component regulatory system AtoS/AtoC. In the presence of acetoacetate, AtoS/AtoC stimulates the expression of the atoDAEB operon, leading to short chain fatty acid catabolism and activation of the poly-(R)-3-hydroxybutyrate (cPHB) biosynthetic pathway. Also induces the operon in response to spermidine. Involved in the regulation of motility and chemotaxis, via transcriptional induction of the flagellar regulon. AtoS is a membrane-associated kinase that phosphorylates and activates AtoC in response to environmental signals. The polypeptide is Signal transduction histidine-protein kinase AtoS (atoS) (Escherichia coli (strain K12)).